We begin with the raw amino-acid sequence, 87 residues long: MVIIRLARGGAKKRPFFNMVVADSRNARDGKFIERVGFYNPRAAEGEESLRVKLDRVTYWQSKGAQPSDTVKKLIKQFDSRQEVAGS.

Belongs to the bacterial ribosomal protein bS16 family.

This chain is Small ribosomal subunit protein bS16, found in Nitrosospira multiformis (strain ATCC 25196 / NCIMB 11849 / C 71).